Here is a 173-residue protein sequence, read N- to C-terminus: 2-C-methyl-D-erythritol 2,4-cyclodiphosphate synthase (173 aa).

A divalent metal cation is bound by residues Asp17 and His19. Residues 17–19 (DVH) and 49–50 (HS) each bind 4-CDP-2-C-methyl-D-erythritol 2-phosphate. His57 lines the a divalent metal cation pocket. Residues 76 to 80 (FPNTD), 147 to 150 (TTTE), and Arg157 each bind 4-CDP-2-C-methyl-D-erythritol 2-phosphate.

This sequence belongs to the IspF family. In terms of assembly, homotrimer. A divalent metal cation serves as cofactor.

It catalyses the reaction 4-CDP-2-C-methyl-D-erythritol 2-phosphate = 2-C-methyl-D-erythritol 2,4-cyclic diphosphate + CMP. It participates in isoprenoid biosynthesis; isopentenyl diphosphate biosynthesis via DXP pathway; isopentenyl diphosphate from 1-deoxy-D-xylulose 5-phosphate: step 4/6. Involved in the biosynthesis of isopentenyl diphosphate (IPP) and dimethylallyl diphosphate (DMAPP), two major building blocks of isoprenoid compounds. Catalyzes the conversion of 4-diphosphocytidyl-2-C-methyl-D-erythritol 2-phosphate (CDP-ME2P) to 2-C-methyl-D-erythritol 2,4-cyclodiphosphate (ME-CPP) with a corresponding release of cytidine 5-monophosphate (CMP). The sequence is that of 2-C-methyl-D-erythritol 2,4-cyclodiphosphate synthase from Ehrlichia ruminantium (strain Welgevonden).